Here is a 1058-residue protein sequence, read N- to C-terminus: Isoleucine--tRNA ligase (1058 aa).

The 'HIGH' region signature appears at 48 to 58 (PYTTGHIHLGT). The 'KMSKS' region signature appears at 596–600 (KMSKS). Position 599 (Lys-599) interacts with ATP.

Belongs to the class-I aminoacyl-tRNA synthetase family. IleS type 2 subfamily. As to quaternary structure, monomer. Requires Zn(2+) as cofactor.

Its subcellular location is the cytoplasm. It carries out the reaction tRNA(Ile) + L-isoleucine + ATP = L-isoleucyl-tRNA(Ile) + AMP + diphosphate. Catalyzes the attachment of isoleucine to tRNA(Ile). As IleRS can inadvertently accommodate and process structurally similar amino acids such as valine, to avoid such errors it has two additional distinct tRNA(Ile)-dependent editing activities. One activity is designated as 'pretransfer' editing and involves the hydrolysis of activated Val-AMP. The other activity is designated 'posttransfer' editing and involves deacylation of mischarged Val-tRNA(Ile). This is Isoleucine--tRNA ligase from Methanosarcina barkeri (strain Fusaro / DSM 804).